Reading from the N-terminus, the 300-residue chain is F-box/LRR-repeat protein 15 (300 aa).

Position 1 is an N-acetylmethionine (M1). The 48-residue stretch at 19–66 (LLDLPWEDVLLPHVLSRVPLRQLLWLQRVSRAFRALVQLHLARLRRFD) folds into the F-box domain. An interaction with SMURF1 region spans residues 113–269 (NPQLRSVALA…EPSLSRLRKR (157 aa)). LRR repeat units follow at residues 141–162 (RLQRLSLAHCDWVDGLALRGLA), 167–188 (ALEELDLTACRQLKDEAIVYLA), 194–215 (GLRNLSLAVNANVGDTAVQELA), 220–241 (ELQHLDLTGCLRVGSDGIRTLA), and 246–267 (ALRSLRVRHCHHVAEPSLSRLR).

It belongs to the FBXL15 family. Part of the SCF (SKP1-CUL1-F-box) E3 ubiquitin-protein ligase complex SCF(FBXL15) composed of CUL1, SKP1, RBX1 and FBXL15.

The protein localises to the cytoplasm. Its pathway is protein modification; protein ubiquitination. Its function is as follows. Substrate recognition component of a SCF (SKP1-CUL1-F-box protein) E3 ubiquitin-protein ligase complex which mediates the ubiquitination and subsequent proteasomal degradation of SMURF1, thereby acting as a positive regulator of the BMP signaling pathway. Required for dorsal/ventral pattern formation and bone mass maintenance. Also mediates ubiquitination of SMURF2 and WWP2. This Bos taurus (Bovine) protein is F-box/LRR-repeat protein 15 (FBXL15).